The sequence spans 123 residues: NADH dehydrogenase [ubiquinone] 1 beta subcomplex subunit 7 (123 aa).

Positions 1–32 are disordered; the sequence is MGTKLSVSLEGASTPETAPRVDRPPTFDPQYG. One can recognise a CHCH domain in the interval 59–102; the sequence is RDYCAHHLISLMKCQTQNAPFAGHACDGERGAWDKCEYDDHIMR. 2 consecutive short sequence motifs (cx9C motif) follow at residues 62–72 and 84–94; these read CAHHLISLMKC and CDGERGAWDKC. Cystine bridges form between Cys62/Cys94 and Cys72/Cys84.

The protein belongs to the complex I NDUFB7 subunit family. Complex I is composed of 45 different subunits.

It is found in the mitochondrion. The protein resides in the mitochondrion inner membrane. It localises to the mitochondrion intermembrane space. Its function is as follows. Accessory subunit of the mitochondrial membrane respiratory chain NADH dehydrogenase (Complex I), that is believed not to be involved in catalysis. Complex I functions in the transfer of electrons from NADH to the respiratory chain. The immediate electron acceptor for the enzyme is believed to be ubiquinone. The polypeptide is NADH dehydrogenase [ubiquinone] 1 beta subcomplex subunit 7 (Caenorhabditis elegans).